The chain runs to 704 residues: Polyribonucleotide nucleotidyltransferase (704 aa).

Residues Asp491 and Asp497 each contribute to the Mg(2+) site. A KH domain is found at 558–617 (PNYAVIEINSDKIRDVIGKGGATIRQLTEDTGAVIDIDDNGTIRIFGENKAATKEAIRQI). Residues 627–695 (GKVYKGTVAR…NRGRIKLTMK (69 aa)) form the S1 motif domain.

It belongs to the polyribonucleotide nucleotidyltransferase family. As to quaternary structure, component of the RNA degradosome, which is a multiprotein complex involved in RNA processing and mRNA degradation. The cofactor is Mg(2+).

The protein localises to the cytoplasm. It carries out the reaction RNA(n+1) + phosphate = RNA(n) + a ribonucleoside 5'-diphosphate. Functionally, involved in mRNA degradation. Catalyzes the phosphorolysis of single-stranded polyribonucleotides processively in the 3'- to 5'-direction. In Psychrobacter sp. (strain PRwf-1), this protein is Polyribonucleotide nucleotidyltransferase.